The chain runs to 132 residues: Fatty acid-binding protein 2 (132 aa).

Residue serine 2 is modified to N-acetylserine. Hexadecanoate-binding positions include glutamine 40 and 128–130; that span reads RYY.

It belongs to the calycin superfamily. Fatty-acid binding protein (FABP) family. Monomer. As to expression, midgut.

It is found in the cytoplasm. In terms of biological role, binds fatty acids in a 1:1 molar ratio. The sequence is that of Fatty acid-binding protein 2 (MFB2) from Manduca sexta (Tobacco hawkmoth).